A 67-amino-acid polypeptide reads, in one-letter code: Large ribosomal subunit protein uL29 (67 aa).

Belongs to the universal ribosomal protein uL29 family.

This chain is Large ribosomal subunit protein uL29, found in Methanosarcina barkeri (strain Fusaro / DSM 804).